A 360-amino-acid chain; its full sequence is Probable CCR4-associated factor 1 homolog 1 (360 aa).

A divalent metal cation is bound by residues aspartate 37, glutamate 39, aspartate 155, and aspartate 226.

The protein belongs to the CAF1 family. Component of the CCR4-NOT complex, at least composed of CRR4 and CAF1 proteins. It depends on a divalent metal cation as a cofactor.

It localises to the nucleus. Its subcellular location is the cytoplasm. It carries out the reaction Exonucleolytic cleavage of poly(A) to 5'-AMP.. Functionally, ubiquitous transcription factor required for a diverse set of processes. It is a component of the CCR4 complex involved in the control of gene expression. This chain is Probable CCR4-associated factor 1 homolog 1 (CAF1-1), found in Arabidopsis thaliana (Mouse-ear cress).